Here is a 1325-residue protein sequence, read N- to C-terminus: ATP-binding cassette sub-family C member 4 (1325 aa).

Positions Tyr92–Ser377 constitute an ABC transmembrane type-1 1 domain. The next 7 membrane-spanning stretches (helical) occupy residues Leu93–Leu113, Ala136–Phe156, Gln207–Ala227, Leu228–Leu248, Ser328–Ala348, Val351–Ser371, and Leu440–Gly460. Residues Val410–Lys633 form the ABC transporter 1 domain. Gly445 to Ser452 contacts ATP. Phosphothreonine is present on residues Thr646 and Thr648. Residues Ser657–Pro667 show a composition bias toward low complexity. Residues Ser657–Glu688 form a disordered region. Residues Ser664 and Ser668 each carry the phosphoserine modification. The chain crosses the membrane as a helical span at residues His710–Leu730. The region spanning Phe714–Asn1005 is the ABC transmembrane type-1 2 domain. Residues Asn746 and Asn754 are each glycosylated (N-linked (GlcNAc...) asparagine). 6 helical membrane-spanning segments follow: residues Leu771–Val791, Leu836–Val856, Val858–Leu878, Ala954–Leu974, Gly977–Val997, and Glu1038–Leu1058. Positions Ile1041–Gln1274 constitute an ABC transporter 2 domain. Gly1075–Ser1082 provides a ligand contact to ATP. Residues Glu1322–Leu1325 carry the PDZ-binding motif.

The protein belongs to the ABC transporter superfamily. ABCC family. Conjugate transporter (TC 3.A.1.208) subfamily. As to quaternary structure, interacts (via PDZ-binding motif) with SNX27 (via PDZ domain); this interaction accelerates MRP4 internalization. It depends on Mg(2+) as a cofactor. Post-translationally, N-glycosylated; leading to substrate-selective effects on its transport activity. Widely expressed, with particularly high levels in prostate, but is barely detectable in liver. sinusoidal membrane of hepatocytes.

The protein localises to the basolateral cell membrane. Its subcellular location is the apical cell membrane. It carries out the reaction ATP + H2O + xenobioticSide 1 = ADP + phosphate + xenobioticSide 2.. The enzyme catalyses an S-substituted glutathione(in) + ATP + H2O = an S-substituted glutathione(out) + ADP + phosphate + H(+). The catalysed reaction is 17beta-estradiol 17-O-(beta-D-glucuronate)(in) + ATP + H2O = 17beta-estradiol 17-O-(beta-D-glucuronate)(out) + ADP + phosphate + H(+). It catalyses the reaction dehydroepiandrosterone 3-sulfate(in) + ATP + H2O = dehydroepiandrosterone 3-sulfate(out) + ADP + phosphate + H(+). It carries out the reaction leukotriene C4(in) + ATP + H2O = leukotriene C4(out) + ADP + phosphate + H(+). The enzyme catalyses leukotriene B4(in) + ATP + H2O = leukotriene B4(out) + ADP + phosphate + H(+). The catalysed reaction is urate(in) + ATP + H2O = urate(out) + ADP + phosphate + H(+). It catalyses the reaction 3',5'-cyclic GMP(in) + ATP + H2O = 3',5'-cyclic GMP(out) + ADP + phosphate + H(+). It carries out the reaction 3',5'-cyclic AMP(in) + ATP + H2O = 3',5'-cyclic AMP(out) + ADP + phosphate + H(+). The enzyme catalyses prostaglandin E2(in) + ATP + H2O = prostaglandin E2(out) + ADP + phosphate + H(+). The catalysed reaction is prostaglandin E1(in) + ATP + H2O = prostaglandin E1(out) + ADP + phosphate + H(+). It catalyses the reaction glycodeoxycholate(in) + glutathione(in) + ATP + H2O = glycodeoxycholate(out) + glutathione(out) + ADP + phosphate + H(+). It carries out the reaction cholate(in) + glutathione(in) + ATP + H2O = cholate(out) + glutathione(out) + ADP + phosphate + H(+). The enzyme catalyses glycocholate(in) + glutathione(in) + ATP + H2O = glycocholate(out) + glutathione(out) + ADP + phosphate + H(+). The catalysed reaction is taurocholate(in) + glutathione(in) + ATP + H2O = taurocholate(out) + glutathione(out) + ADP + phosphate + H(+). It catalyses the reaction glycochenodeoxycholate(in) + glutathione(in) + ATP + H2O = glycochenodeoxycholate(out) + glutathione(out) + ADP + phosphate + H(+). It carries out the reaction taurochenodeoxycholate(in) + glutathione(in) + ATP + H2O = taurochenodeoxycholate(out) + glutathione(out) + ADP + phosphate + H(+). The enzyme catalyses glycoursodeoxycholate(in) + glutathione(in) + ATP + H2O = glycoursodeoxycholate(out) + glutathione(out) + ADP + phosphate + H(+). The catalysed reaction is tauroursodeoxycholate(in) + glutathione(in) + ATP + H2O = tauroursodeoxycholate(out) + glutathione(out) + ADP + phosphate + H(+). GSH stimulates the transport of MRP4. Urate inhibits methotrexate transport but stimulates cGMP transport. Nonsteroidal anti-inflammatory drugs (NSAIDs) strongly suppress the transport of MRP4 substrates. In terms of biological role, ATP-dependent transporter of the ATP-binding cassette (ABC) family that actively extrudes physiological compounds and xenobiotics from cells. Transports a range of endogenous molecules that have a key role in cellular communication and signaling, including cyclic nucleotides such as cyclic AMP (cAMP) and cyclic GMP (cGMP), bile acids, steroid conjugates, urate, and prostaglandins. Mediates the ATP-dependent efflux of glutathione conjugates such as leukotriene C4 (LTC4) and leukotriene B4 (LTB4) too. The presence of GSH is necessary for the ATP-dependent transport of LTB4, whereas GSH is not required for the transport of LTC4. Mediates the cotransport of bile acids with reduced glutathione (GSH). Transports a wide range of drugs and their metabolites, including anticancer, antiviral and antibiotics molecules. Confers resistance to anticancer agents such as methotrexate. The sequence is that of ATP-binding cassette sub-family C member 4 (ABCC4) from Homo sapiens (Human).